The following is a 227-amino-acid chain: MVEVKKHKFPGVYVVIDDDGSEKIATKNLVPGQRVYGERVIKWEGEEYRIWNPHRSKLGAAIVNGLKNFPIKPGKSVLYLGIASGTTASHVSDIVGWEGKIYGIEFSPRVLRELVPIVEERRNIIPILGDATKPEEYRALVTKVDVIFEDVAQPTQAKILIDNAKAYLKRGGYGMIAVKSRSIDVTKEPEQVFKEVERELSEYFEVIERLNLEPYEKDHALFVVRKP.

S-adenosyl-L-methionine contacts are provided by residues 86–87 (TT), 105–106 (EF), 130–131 (DA), and 150–153 (DVAQ).

It belongs to the methyltransferase superfamily. Fibrillarin family. As to quaternary structure, interacts with nop5. Component of box C/D small ribonucleoprotein (sRNP) particles that contain rpl7ae, FlpA and nop5, plus a guide RNA. These sRNP particles form homodimers, giving rise to an asymmetric holoenzyme.

Functionally, involved in pre-rRNA and tRNA processing. Utilizes the methyl donor S-adenosyl-L-methionine to catalyze the site-specific 2'-hydroxyl methylation of ribose moieties in rRNA and tRNA. Site specificity is provided by a guide RNA that base pairs with the substrate. Methylation occurs at a characteristic distance from the sequence involved in base pairing with the guide RNA. The chain is Fibrillarin-like rRNA/tRNA 2'-O-methyltransferase from Pyrococcus furiosus (strain ATCC 43587 / DSM 3638 / JCM 8422 / Vc1).